The chain runs to 227 residues: MSVAVETFGFFMSALGLLMLGLTLSNSYWRVSTVHGNVITTNTIFENLWYSCATDSLGVSNCWDFPSMLALSGYVQGCRALMITAILLGFLGLFLGMVGLRCTNVGNMDLSKKAKLLAIAGTLHILAGACGMVAISWYAVNITTDFFNPLYAGTKYELGPALYLGWSASLLSILGGICVFSTCCCSSKEEPATRAGLPYKPSTVVIPRATSDESDISFGKYGKNAYV.

Position 1 (M1) is a topological domain, cytoplasmic. Residues 2 to 24 (SVAVETFGFFMSALGLLMLGLTL) form a helical membrane-spanning segment. Residues 25–74 (SNSYWRVSTVHGNVITTNTIFENLWYSCATDSLGVSNCWDFPSMLALSGY) are Extracellular-facing. Residues C52 and C62 are joined by a disulfide bond. The helical transmembrane segment at 75–99 (VQGCRALMITAILLGFLGLFLGMVG) threads the bilayer. Over 100–115 (LRCTNVGNMDLSKKAK) the chain is Cytoplasmic. S111 is modified (phosphoserine). Residues 116 to 140 (LLAIAGTLHILAGACGMVAISWYAV) form a helical membrane-spanning segment. Residues 141–159 (NITTDFFNPLYAGTKYELG) are Extracellular-facing. The tract at residues 146 to 147 (FF) is important for the formation of tight-junction strand-like structures. A helical membrane pass occupies residues 160-182 (PALYLGWSASLLSILGGICVFST). At 183–227 (CCCSSKEEPATRAGLPYKPSTVVIPRATSDESDISFGKYGKNAYV) the chain is on the cytoplasmic side. A phosphoserine mark is found at S211, S214, and S217.

The protein belongs to the claudin family. In terms of assembly, can form homo- and heteropolymeric tight junction strands. Post-translationally, palmitoylated when heterogeneously expressed in S.frugiperda cells. Detected in duodenum, jejunum and ileum. Detected on intestinal villi and crypts (at protein level). Ubiquitous. Detected in small and large intestine, colon, jejunum, heart, kidney and lung.

It is found in the cell junction. Its subcellular location is the tight junction. The protein resides in the cell membrane. The catalysed reaction is Na(+)(in) = Na(+)(out). The enzyme catalyses K(+)(in) = K(+)(out). It catalyses the reaction Cs(+)(in) = Cs(+)(out). It carries out the reaction Rb(+)(in) = Rb(+)(out). The catalysed reaction is Li(+)(in) = Li(+)(out). The enzyme catalyses NH4(+)(in) = NH4(+)(out). It catalyses the reaction methylamine(out) = methylamine(in). It carries out the reaction H2O(in) = H2O(out). Functionally, forms paracellular channels: polymerizes in tight junction strands with cation- and water-selective channels through the strands, conveying epithelial permeability in a process known as paracellular tight junction permeability. In intestinal epithelium, allows for sodium and water fluxes from the peritoneal side to the lumen of the intestine to regulate nutrient absorption and intestinal morphogenesis. The protein is Claudin-15 of Mus musculus (Mouse).